The primary structure comprises 529 residues: BTB/POZ domain-containing protein 6 (529 aa).

Residues 127-197 (ADVHFIVGPA…LYSDEIDLEA (71 aa)) form the BTB domain.

As to quaternary structure, homodimer and heterodimer. Interacts with cul3 via the BTB domain.

The protein localises to the cytoplasm. Adapter protein for the cul3 E3 ubiquitin-protein ligase complex. Involved in late neuronal development and muscle formation. The chain is BTB/POZ domain-containing protein 6 (btbd6) from Xenopus tropicalis (Western clawed frog).